Here is a 379-residue protein sequence, read N- to C-terminus: NAD-dependent protein deacetylase sirtuin-2 (379 aa).

Residues 1–10 show a composition bias toward basic and acidic residues; the sequence is MSEEVSKRVE. Residues 1 to 32 are disordered; it reads MSEEVSKRVEEEADTPGLEGQSDDSSDEGDAS. Residues 21–32 show a composition bias toward acidic residues; it reads QSDDSSDEGDAS. Residues 55–335 enclose the Deacetylase sirtuin-type domain; the sequence is KVLDELTLDS…MTLAELLGWK (281 aa). NAD(+) is bound by residues 83–87, 93–95, and 165–168; these read AGIST, DFR, and QNID. Histidine 185 (proton acceptor) is an active-site residue. Cysteine 193, cysteine 198, cysteine 219, and cysteine 222 together coordinate Zn(2+). Residues 260-261, 284-286, and cysteine 321 contribute to the NAD(+) site; these read TS and NME. Residues 349 to 361 show a composition bias toward basic and acidic residues; that stretch reads IDSKDAKKTDKEA. Residues 349-379 are disordered; sequence IDSKDAKKTDKEASQSSKSAVAEAEKTDKTE.

Belongs to the sirtuin family. Class I subfamily. Zn(2+) serves as cofactor.

Its subcellular location is the cytoplasm. The protein resides in the nucleus. The catalysed reaction is N(6)-acetyl-L-lysyl-[protein] + NAD(+) + H2O = 2''-O-acetyl-ADP-D-ribose + nicotinamide + L-lysyl-[protein]. The enzyme catalyses N(6)-tetradecanoyl-L-lysyl-[protein] + NAD(+) + H2O = 2''-O-tetradecanoyl-ADP-D-ribose + nicotinamide + L-lysyl-[protein]. It catalyses the reaction N(6)-hexadecanoyl-L-lysyl-[protein] + NAD(+) + H2O = 2''-O-hexadecanoyl-ADP-D-ribose + nicotinamide + L-lysyl-[protein]. NAD-dependent protein deacetylase, which deacetylates internal lysines on histone and alpha-tubulin as well as many other proteins such as key transcription factors. Participates in the modulation of multiple and diverse biological processes such as cell cycle control, genomic integrity, microtubule dynamics, cell differentiation, metabolic networks, and autophagy. Plays a major role in the control of cell cycle progression and genomic stability. Deacetylates histone H4 at 'Lys-16' (H4K16ac) at the VEGFA promoter. Thereby contributes to regulate expression of vegfa, a key regulator of angiogenesis. In addition to protein deacetylase activity, also has activity toward long-chain fatty acyl groups and mediates protein-lysine demyristoylation and depalmitoylation of target proteins. This is NAD-dependent protein deacetylase sirtuin-2 (sirt2) from Danio rerio (Zebrafish).